The following is a 78-amino-acid chain: Probable [Fe-S]-dependent transcriptional repressor (78 aa).

Iron-sulfur cluster-binding residues include cysteine 56, cysteine 61, cysteine 64, and cysteine 70.

It belongs to the FeoC family.

Its function is as follows. May function as a transcriptional regulator that controls feoABC expression. The sequence is that of Probable [Fe-S]-dependent transcriptional repressor from Enterobacter sp. (strain 638).